Reading from the N-terminus, the 507-residue chain is BPI fold-containing family C protein (507 aa).

The first 23 residues, 1–23 (MCTKTIPVLWGCFLLWNLYVSSS), serve as a signal peptide directing secretion. N-linked (GlcNAc...) asparagine glycans are attached at residues N79, N92, and N113. A disulfide bridge links C161 with C200. N-linked (GlcNAc...) asparagine glycosylation is found at N213, N225, N257, N301, N355, N372, and N415.

The protein belongs to the BPI/LBP/Plunc superfamily. BPI/LBP family. In terms of tissue distribution, detected in the basal layer of the epidermis from inflammatory skin from psoriasis patients, but not in normal skin.

It is found in the secreted. The chain is BPI fold-containing family C protein (BPIFC) from Homo sapiens (Human).